Reading from the N-terminus, the 58-residue chain is Small ribosomal subunit protein eS31 (58 aa).

Positions 29, 32, 48, and 51 each coordinate Zn(2+). Residues 29–51 (CPRCGSFMAHHLKPVPRWHCGKC) form a C4-type zinc finger.

The protein belongs to the eukaryotic ribosomal protein eS31 family. In terms of assembly, part of the 30S ribosomal subunit. Requires Zn(2+) as cofactor.

The chain is Small ribosomal subunit protein eS31 from Ignicoccus hospitalis (strain KIN4/I / DSM 18386 / JCM 14125).